Here is a 1156-residue protein sequence, read N- to C-terminus: Nuclear pore-associated protein 1 (1156 aa).

8 disordered regions span residues 1–60, 155–204, 219–266, 481–515, 680–703, 732–786, 872–915, and 1026–1046; these read MGNL…RRPS, EGPR…FRCS, NSMS…PEPA, GGSY…TRES, TLVN…MHTT, NTQP…KTSL, STSF…SSFI, and APGP…SGTP. Positions 50–59 are enriched in basic residues; sequence LFRRNARRRP. Basic and acidic residues predominate over residues 156-165; that stretch reads GPRRVKKDED. 2 stretches are compositionally biased toward polar residues: residues 179-197 and 219-231; these read PLSS…TQGD and NSMS…SPAS. Composition is skewed to polar residues over residues 680 to 692, 732 to 750, 884 to 915, and 1028 to 1046; these read TLVN…SSSK, NTQP…SLPA, TTTS…SSFI, and GPSS…SGTP.

In terms of assembly, associates with the nuclear pore complex (NPC). In terms of tissue distribution, testis-specific in adults. In fetal brain expressed only from the paternal allele.

Its subcellular location is the nucleus. The protein resides in the nucleoplasm. The protein localises to the nucleus inner membrane. Functionally, may be involved in spermatogenesis. This chain is Nuclear pore-associated protein 1 (NPAP1), found in Homo sapiens (Human).